Here is a 312-residue protein sequence, read N- to C-terminus: NAD(P)(+)--arginine ADP-ribosyltransferase 2 (312 aa).

The first 20 residues, 1–20 (MELLALRWVLLAGTLLSTSA), serve as a signal peptide directing secretion. Residues 21–31 (ASSALQEGDLG) constitute a propeptide that is removed on maturation. Disulfide bonds link C51-C260 and C159-C208. The TR mART core domain maps to 71–256 (YAYAVGWRKA…IYLRSKGKMS (186 aa)). NAD(+) contacts are provided by Y108, R164, and Q183. R164 is a catalytic residue. The active site involves S186. Residue S217 participates in NAD(+) binding. The active site involves E224. Residues 267–312 (GGQWGRGHQEVGLGLSPGLALPVLPCSNCSCWGSGHRAGDPIPAAV) constitute a propeptide that is removed on maturation.

The protein belongs to the Arg-specific ADP-ribosyltransferase family.

It is found in the secreted. The protein localises to the extracellular space. It catalyses the reaction L-arginyl-[protein] + NAD(+) = N(omega)-(ADP-D-ribosyl)-L-arginyl-[protein] + nicotinamide + H(+). This chain is NAD(P)(+)--arginine ADP-ribosyltransferase 2, found in Gallus gallus (Chicken).